The primary structure comprises 208 residues: CASP-like protein 2U9 (208 aa).

Residues 1–27 lie on the Cytoplasmic side of the membrane; sequence MGVADAPSPGNVPVLGDMKNRSAAEMK. The chain crosses the membrane as a helical span at residues 28-48; it reads ISVLALRALTLVLLVIALALM. Over 49–87 the chain is Extracellular; sequence VSNKQTQSIPIKLPGMASTIFLKKTATFSQITGVQYYVG. Residues 88–108 traverse the membrane as a helical segment; the sequence is ALSVAVAYMFFQMLAGLFTIL. Topologically, residues 109–120 are cytoplasmic; the sequence is TTGSIVGSKSRA. The chain crosses the membrane as a helical span at residues 121–141; the sequence is WVTFILDQLIAYLMVSAATVV. Over 142–168 the chain is Extracellular; sequence AEVGYIARRGETKVGWNQVCSDFKHYC. Residues 169–189 form a helical membrane-spanning segment; sequence FIYGFSLVNAFLATIAFLPVV. Over 190-208 the chain is Cytoplasmic; it reads AVSAFHLFRMYGAQSAQSK.

This sequence belongs to the Casparian strip membrane proteins (CASP) family. Homodimer and heterodimers.

The protein resides in the cell membrane. This is CASP-like protein 2U9 from Selaginella moellendorffii (Spikemoss).